The sequence spans 335 residues: Terpene synthase 4 (335 aa).

A DDxx(x)D/E motif motif is present at residues 103-108 (DDYIFE). The NDxxSxxxD/E motif motif lies at 243-251 (NDLYSFNRE).

It belongs to the terpene synthase family.

The catalysed reaction is (2E,6E)-farnesyl diphosphate + H2O = (6E)-nerolidol + diphosphate. Functionally, terpene synthase that converts its substrate farnesyl diphosphate (FPP) into the sesquiterpene (E)-nerolidol. The polypeptide is Terpene synthase 4 (Dictyostelium discoideum (Social amoeba)).